The following is a 211-amino-acid chain: Probable superoxide dismutase [Mn], mitochondrial (211 aa).

Mn(2+) is bound by residues histidine 36, histidine 84, aspartate 173, and histidine 177.

Belongs to the iron/manganese superoxide dismutase family. Homotetramer. The cofactor is Mn(2+).

The protein localises to the mitochondrion matrix. The catalysed reaction is 2 superoxide + 2 H(+) = H2O2 + O2. In terms of biological role, destroys superoxide anion radicals which are normally produced within the cells and which are toxic to biological systems. In Debaryomyces hansenii (strain ATCC 36239 / CBS 767 / BCRC 21394 / JCM 1990 / NBRC 0083 / IGC 2968) (Yeast), this protein is Probable superoxide dismutase [Mn], mitochondrial.